Consider the following 395-residue polypeptide: MKVVIVGAGMGGMSAAIALRQIGIDTVVYERVTENKPVGAAISVWSNGVKCLNYLGLQEETAELGGKVETMSYVDGHTGDTMCRFSMHPLIEQVGQRPYPIARAELQLMLMKAYGIDDINFGMKMVGVENDTAGSAAKATFADGTTVSADVIIGADGAGSITREYVLGGPVSRRYAGYVNYNGLVSTDDAIGPATEWTTYVGDGKRVSVMPVSDDRFYFFFDVVEPQGSPYEEGRVREVLRAHFAGWTPGVQTLIDTLDPLATNRVEILDLDPFHTWVKGRVAVLGDAAHNTTPDIGQGGCSAMEDAIALQWAFKDHPDDVHAALAAYQSARTERAADLVLRARKRCDVTHAKDPQVTSRWYDELRNEDGTNIIRGIVGNIVGGPLTPVTAATEG.

FAD contacts are provided by residues G11, 30 to 31 (ER), S43, and M125. Residues N180, R206, and 218–220 (YFF) each bind substrate. FAD contacts are provided by residues D287 and 297-301 (GQGGC).

It belongs to the FAD-dependent urate hydroxylase family. In terms of assembly, monomer. FAD is required as a cofactor.

The enzyme catalyses urate + NADH + O2 + H(+) = 5-hydroxyisourate + NAD(+) + H2O. Its pathway is purine metabolism; urate degradation. Functionally, catalyzes the hydroxylation of urate to 5-hydroxyisourate (HIU). Is likely to be involved in the urate degradation pathway to allantoin. Prefers NADH over NADPH as the electron donor. This Mycolicibacterium vanbaalenii (strain DSM 7251 / JCM 13017 / BCRC 16820 / KCTC 9966 / NRRL B-24157 / PYR-1) (Mycobacterium vanbaalenii) protein is FAD-dependent urate hydroxylase.